The following is a 242-amino-acid chain: Terpene cyclase cle7 (242 aa).

Helical transmembrane passes span 20–40 (LLLT…ITTI), 50–69 (GVSL…FAIL), 79–101 (VILR…FARS), 117–137 (LFVL…SVLL), 143–163 (FYWS…GILV), 172–192 (SYGM…SLFL), and 207–227 (ILMR…GVCF).

It belongs to the paxB family.

It localises to the membrane. The protein operates within secondary metabolite biosynthesis; terpenoid biosynthesis. Non-reducing polyketide synthase; part of the cluster A that mediates the biosynthesis of chevalone E and its oxidized derivatives that possess a unique five-membered lactone ring and can synergistically enhance the cytotoxicity of doxorubicin (DOX) in breast cancer cells. Within the pathway, cle7 takes part to the biosynthesis of the molecular scaffold by catalyzing the cyclization of the prenyl group initiated by protonation and ring-opening of the epoxide to produce the chevalone E intermediate. The molecular scaffold is commonly biosynthesized by a series of enzymes including the non-reducing polyketide synthase (NR-PKS) cle1 that produces the alpha-pyrone triacetic acid lactone (TAL); The membrane-bound prenyltransferase cle5 that accepts TAL as its substrate to perform a C-3 geranylgeranylation reaction, in which the pathway-dedicated GGPS cle6 is required to provide GGPP, the other substrate of cle5; the FAD-dependent monooxygenase Cle3 that forms an (S)-epoxide ring at the terminal olefin of the geranylgeranyl group; and the terpene cyclase Cle7 that catalyzes the cyclization of the prenyl group that yields the pentacyclic pathway intermediate chevalone E. Chevalone E can derivatize into seven new oxidized analogs by the cytochrome P450 monooxygenases cle2 (acting at C-20) and cle4 (acting at C-11 and C-12). The sequence is that of Terpene cyclase cle7 from Aspergillus versicolor.